Reading from the N-terminus, the 167-residue chain is CASP-like protein 3 (167 aa).

Over 1 to 2 (MK) the chain is Cytoplasmic. A helical membrane pass occupies residues 3 to 23 (IIAIAPRIGAAVLSLVAFSVM). The Extracellular segment spans residues 24–48 (ASTGERRSGAGSTFKVKFSDFQAYN). A helical transmembrane segment spans residues 49–69 (YLIALNVILFVYSTVQLVMLV). Over 70–80 (NSNHNSSFSSP) the chain is Cytoplasmic. A helical membrane pass occupies residues 81 to 101 (FKWVLGVYICDQLLAFLLFSA). At 102–137 (SSSAATASELSRHGLHNIWPPACATWKLWTFCSKAE) the chain is on the extracellular side. A helical transmembrane segment spans residues 138-158 (AAVAMSFLSSFFIITSSILSG). The Cytoplasmic portion of the chain corresponds to 159-167 (YHLSKVPAV).

This sequence belongs to the Casparian strip membrane proteins (CASP) family. In terms of assembly, homodimer and heterodimers.

The protein localises to the cell membrane. The sequence is that of CASP-like protein 3 from Osmunda lancea (Fern).